Here is a 149-residue protein sequence, read N- to C-terminus: Myosin, essential light chain (149 aa).

EF-hand domains follow at residues 7-42 (SMID…FGLN) and 79-114 (GSYE…LGEK).

Myosin is a hexamer of 2 heavy chains and 4 light chains (two regulatory light chains and two essential light chains).

The sequence is that of Myosin, essential light chain from Branchiostoma floridae (Florida lancelet).